Consider the following 132-residue polypeptide: Glycine cleavage system H protein (132 aa).

In terms of domain architecture, Lipoyl-binding spans 24 to 106 (IATIGLSAHA…YEEGWFIKVR (83 aa)). Position 65 is an N6-lipoyllysine (Lys65).

This sequence belongs to the GcvH family. As to quaternary structure, the glycine cleavage system is composed of four proteins: P, T, L and H. Requires (R)-lipoate as cofactor.

In terms of biological role, the glycine cleavage system catalyzes the degradation of glycine. The H protein shuttles the methylamine group of glycine from the P protein to the T protein. This is Glycine cleavage system H protein from Picosynechococcus sp. (strain ATCC 27264 / PCC 7002 / PR-6) (Agmenellum quadruplicatum).